A 117-amino-acid chain; its full sequence is Large ribosomal subunit protein bL20c (117 aa).

The protein belongs to the bacterial ribosomal protein bL20 family.

The protein resides in the plastid. It localises to the chloroplast. Its function is as follows. Binds directly to 23S ribosomal RNA and is necessary for the in vitro assembly process of the 50S ribosomal subunit. It is not involved in the protein synthesizing functions of that subunit. This Acorus gramineus (Dwarf sweet flag) protein is Large ribosomal subunit protein bL20c.